The following is a 328-amino-acid chain: Pantothenate kinase (328 aa).

The span at 1 to 12 (MAAPLNAQTRAP) shows a compositional bias: polar residues. The disordered stretch occupies residues 1 to 22 (MAAPLNAQTRAPQATGRAPDFS). Position 113–120 (113–120 (GSVAVGKS)) interacts with ATP.

Belongs to the prokaryotic pantothenate kinase family.

It is found in the cytoplasm. It catalyses the reaction (R)-pantothenate + ATP = (R)-4'-phosphopantothenate + ADP + H(+). The protein operates within cofactor biosynthesis; coenzyme A biosynthesis; CoA from (R)-pantothenate: step 1/5. The sequence is that of Pantothenate kinase from Corynebacterium efficiens (strain DSM 44549 / YS-314 / AJ 12310 / JCM 11189 / NBRC 100395).